The following is an 893-amino-acid chain: Pentatricopeptide repeat-containing protein At5g52850, chloroplastic (893 aa).

19 PPR repeats span residues 57 to 87, 88 to 122, 123 to 157, 158 to 188, 189 to 223, 224 to 257, 258 to 288, 289 to 323, 324 to 358, 359 to 390, 391 to 425, 426 to 460, 461 to 491, 492 to 526, 527 to 561, 562 to 592, 593 to 627, 628 to 658, and 664 to 694; these read NLDLCNNLLSLYLKTDGIWNARKLFDEMSHR, TVFAWTVMISAFTKSQEFASALSLFEEMMASGTHP, NEFTFSSVVRSCAGLRDISYGGRVHGSVIKTGFEG, NSVVGSSLSDLYSKCGQFKEACELFSSLQNA, DTISWTMMISSLVGARKWREALQFYSEMVKAGVPP, NEFTFVKLLGASSFLGLEFGKTIHSNIIVRGIPL, NVVLKTSLVDFYSQFSKMEDAVRVLNSSGEQ, DVFLWTSVVSGFVRNLRAKEAVGTFLEMRSLGLQP, NNFTYSAILSLCSAVRSLDFGKQIHSQTIKVGFED, STDVGNALVDMYMKCSASEVEASRVFGAMVSP, NVVSWTTLILGLVDHGFVQDCFGLLMEMVKREVEP, NVVTLSGVLRACSKLRHVRRVLEIHAYLLRRHVDG, EMVVGNSLVDAYASSRKVDYAWNVIRSMKRR, DNITYTSLVTRFNELGKHEMALSVINYMYGDGIRM, DQLSLPGFISASANLGALETGKHLHCYSVKSGFSG, AASVLNSLVDMYSKCGSLEDAKKVFEEIATP, DVVSWNGLVSGLASNGFISSALSAFEEMRMKETEP, DSVTFLILLSACSNGRLTDLGLEYFQVMKKI, and QVEHYVHLVGILGRAGRLEEATGVVETMHLK. Residues 699-774 are type E motif; the sequence is IFKTLLRACR…KLGKSTVEVQ (76 aa). A type E(+) motif region spans residues 775–806; the sequence is GKVHSFVSEDVTRVDKTNGIYAEIESIKEEIK. A type DYW motif region spans residues 807 to 893; the sequence is RFGSPYRGNE…SCKREETSFV (87 aa).

This sequence belongs to the PPR family. PCMP-H subfamily.

Its subcellular location is the plastid. It is found in the chloroplast. The sequence is that of Pentatricopeptide repeat-containing protein At5g52850, chloroplastic (PCMP-H31) from Arabidopsis thaliana (Mouse-ear cress).